The following is a 428-amino-acid chain: Divergent protein kinase domain 1A (428 aa).

The Cytoplasmic segment spans residues 1–27 (MARSLCAGAWLRKPHYLQARLSYMRVK). Residues 28 to 48 (YLFFSWLVVFVGSWIIYVQYS) traverse the membrane as a helical segment. Residues 49–428 (TYTELCRGKD…WKKISYTNDS (380 aa)) lie on the Lumenal side of the membrane.

Belongs to the DIPK family. Among the many cysteines in the lumenal domain, most are probably involved in disulfide bonds. In terms of tissue distribution, ubiquitous.

The protein resides in the endoplasmic reticulum membrane. This Mus musculus (Mouse) protein is Divergent protein kinase domain 1A (Dipk1a).